The following is a 588-amino-acid chain: Aspartate--tRNA ligase (588 aa).

An L-aspartate-binding site is contributed by Glu-174. The segment at 198–201 is aspartate; that stretch reads QLFK. L-aspartate is bound at residue Arg-220. Residues 220–222 and Gln-229 contribute to the ATP site; that span reads RDE. His-448 contributes to the L-aspartate binding site. Glu-482 is a binding site for ATP. An L-aspartate-binding site is contributed by Arg-489. Residue 534–537 participates in ATP binding; that stretch reads GIDR.

It belongs to the class-II aminoacyl-tRNA synthetase family. Type 1 subfamily. Homodimer.

The protein resides in the cytoplasm. It carries out the reaction tRNA(Asp) + L-aspartate + ATP = L-aspartyl-tRNA(Asp) + AMP + diphosphate. Its function is as follows. Catalyzes the attachment of L-aspartate to tRNA(Asp) in a two-step reaction: L-aspartate is first activated by ATP to form Asp-AMP and then transferred to the acceptor end of tRNA(Asp). In Xanthomonas oryzae pv. oryzae (strain MAFF 311018), this protein is Aspartate--tRNA ligase.